The primary structure comprises 545 residues: Light-independent protochlorophyllide reductase subunit N (545 aa).

[4Fe-4S] cluster-binding residues include cysteine 102, cysteine 127, and cysteine 187.

This sequence belongs to the BchN/ChlN family. As to quaternary structure, protochlorophyllide reductase is composed of three subunits; ChlL, ChlN and ChlB. Forms a heterotetramer of two ChlB and two ChlN subunits. It depends on [4Fe-4S] cluster as a cofactor.

The protein resides in the plastid. The protein localises to the chloroplast. The catalysed reaction is chlorophyllide a + oxidized 2[4Fe-4S]-[ferredoxin] + 2 ADP + 2 phosphate = protochlorophyllide a + reduced 2[4Fe-4S]-[ferredoxin] + 2 ATP + 2 H2O. The protein operates within porphyrin-containing compound metabolism; chlorophyll biosynthesis (light-independent). Component of the dark-operative protochlorophyllide reductase (DPOR) that uses Mg-ATP and reduced ferredoxin to reduce ring D of protochlorophyllide (Pchlide) to form chlorophyllide a (Chlide). This reaction is light-independent. The NB-protein (ChlN-ChlB) is the catalytic component of the complex. This Chlamydomonas reinhardtii (Chlamydomonas smithii) protein is Light-independent protochlorophyllide reductase subunit N.